The following is a 283-amino-acid chain: Pantothenate synthetase (283 aa).

30-37 lines the ATP pocket; sequence MGNLHDGH. H37 (proton donor) is an active-site residue. Q61 is a binding site for (R)-pantoate. Residue Q61 coordinates beta-alanine. 149–152 is a binding site for ATP; that stretch reads GEKD. Residue Q155 coordinates (R)-pantoate. Position 186–189 (186–189) interacts with ATP; the sequence is LSSR.

Belongs to the pantothenate synthetase family. As to quaternary structure, homodimer.

Its subcellular location is the cytoplasm. It catalyses the reaction (R)-pantoate + beta-alanine + ATP = (R)-pantothenate + AMP + diphosphate + H(+). The protein operates within cofactor biosynthesis; (R)-pantothenate biosynthesis; (R)-pantothenate from (R)-pantoate and beta-alanine: step 1/1. Its function is as follows. Catalyzes the condensation of pantoate with beta-alanine in an ATP-dependent reaction via a pantoyl-adenylate intermediate. The protein is Pantothenate synthetase of Escherichia fergusonii (strain ATCC 35469 / DSM 13698 / CCUG 18766 / IAM 14443 / JCM 21226 / LMG 7866 / NBRC 102419 / NCTC 12128 / CDC 0568-73).